We begin with the raw amino-acid sequence, 549 residues long: Zinc finger protein 18 (549 aa).

Residues 41–123 (RQLFRQFRYQ…TLVESLKGDP (83 aa)) form the SCAN box domain. The region spanning 211–283 (DLGASLLPAA…YLHVNEKIPR (73 aa)) is the KRAB domain. 5 consecutive C2H2-type zinc fingers follow at residues 408–430 (PTCRECGKTFYRNSQLIFHQRTH), 436–458 (FQCTICKKAFLRSSDFVKHQRTH), 464–486 (CKCDYCGKGFSDFSGLRHHEKIH), 492–514 (YKCPICEKSFIQRSNFNRHQRVH), and 520–542 (YKCSHCGKSFSWSSSLDKHQRSH).

This sequence belongs to the krueppel C2H2-type zinc-finger protein family.

Its subcellular location is the nucleus. In terms of biological role, may be involved in transcriptional regulation. This is Zinc finger protein 18 (ZNF18) from Homo sapiens (Human).